Consider the following 263-residue polypeptide: Acyl-[acyl-carrier-protein]--UDP-N-acetylglucosamine O-acyltransferase (263 aa).

The protein belongs to the transferase hexapeptide repeat family. LpxA subfamily. As to quaternary structure, homotrimer.

Its subcellular location is the cytoplasm. The enzyme catalyses a (3R)-hydroxyacyl-[ACP] + UDP-N-acetyl-alpha-D-glucosamine = a UDP-3-O-[(3R)-3-hydroxyacyl]-N-acetyl-alpha-D-glucosamine + holo-[ACP]. It participates in glycolipid biosynthesis; lipid IV(A) biosynthesis; lipid IV(A) from (3R)-3-hydroxytetradecanoyl-[acyl-carrier-protein] and UDP-N-acetyl-alpha-D-glucosamine: step 1/6. Its function is as follows. Involved in the biosynthesis of lipid A, a phosphorylated glycolipid that anchors the lipopolysaccharide to the outer membrane of the cell. In Campylobacter lari (strain RM2100 / D67 / ATCC BAA-1060), this protein is Acyl-[acyl-carrier-protein]--UDP-N-acetylglucosamine O-acyltransferase.